A 329-amino-acid polypeptide reads, in one-letter code: Flotillin-like protein FloA (329 aa).

2 helical membrane-spanning segments follow: residues 4–24 (IGFI…FSFV) and 26–46 (VGLW…TLVG).

The protein belongs to the flotillin-like FloA family. As to quaternary structure, homooligomerizes.

The protein resides in the cell membrane. It is found in the membrane raft. Functionally, found in functional membrane microdomains (FMM) that may be equivalent to eukaryotic membrane rafts. FMMs are highly dynamic and increase in number as cells age. Flotillins are thought to be important factors in membrane fluidity. The sequence is that of Flotillin-like protein FloA from Staphylococcus epidermidis (strain ATCC 35984 / DSM 28319 / BCRC 17069 / CCUG 31568 / BM 3577 / RP62A).